The chain runs to 287 residues: ATP synthase gamma chain (287 aa).

The protein belongs to the ATPase gamma chain family. In terms of assembly, F-type ATPases have 2 components, CF(1) - the catalytic core - and CF(0) - the membrane proton channel. CF(1) has five subunits: alpha(3), beta(3), gamma(1), delta(1), epsilon(1). CF(0) has three main subunits: a, b and c.

The protein resides in the cell inner membrane. Its function is as follows. Produces ATP from ADP in the presence of a proton gradient across the membrane. The gamma chain is believed to be important in regulating ATPase activity and the flow of protons through the CF(0) complex. This Xanthomonas axonopodis pv. citri (strain 306) protein is ATP synthase gamma chain.